A 255-amino-acid polypeptide reads, in one-letter code: Thiazole synthase (255 aa).

The Schiff-base intermediate with DXP role is filled by Lys-96. 1-deoxy-D-xylulose 5-phosphate is bound by residues Gly-157, 183–184 (AG), and 205–206 (NT).

Belongs to the ThiG family. As to quaternary structure, homotetramer. Forms heterodimers with either ThiH or ThiS.

The protein resides in the cytoplasm. The enzyme catalyses [ThiS sulfur-carrier protein]-C-terminal-Gly-aminoethanethioate + 2-iminoacetate + 1-deoxy-D-xylulose 5-phosphate = [ThiS sulfur-carrier protein]-C-terminal Gly-Gly + 2-[(2R,5Z)-2-carboxy-4-methylthiazol-5(2H)-ylidene]ethyl phosphate + 2 H2O + H(+). The protein operates within cofactor biosynthesis; thiamine diphosphate biosynthesis. In terms of biological role, catalyzes the rearrangement of 1-deoxy-D-xylulose 5-phosphate (DXP) to produce the thiazole phosphate moiety of thiamine. Sulfur is provided by the thiocarboxylate moiety of the carrier protein ThiS. In vitro, sulfur can be provided by H(2)S. The polypeptide is Thiazole synthase (Bacillus pumilus (strain SAFR-032)).